A 411-amino-acid chain; its full sequence is Alpha-1-antitrypsin 1-6 (411 aa).

Residues 1–25 (MTTPFSSHGLLLLVGLCCLLLITKT) form the signal peptide. N-linked (GlcNAc...) asparagine glycans are attached at residues N50, N89, N101, and N164.

Belongs to the serpin family. As to expression, expressed predominantly in epididymis where it is found in the epithelial cells of the caput, corpus and cauda epididymis.

It is found in the secreted. In terms of biological role, inhibitor of serine proteases. The polypeptide is Alpha-1-antitrypsin 1-6 (Mus musculus (Mouse)).